Here is a 588-residue protein sequence, read N- to C-terminus: MEIAPSTSRFKLYDQFELLEFPDKYVVKPIESPEEGFSVNRRDGNIKPLDENASSGSPTRVSTIYGVGGTIRLLAGTYLLVITSREEVGNFLGLPIFRVTAMKFLPCNEALRFATAQEKKDETYFRTLLQALETTPGLYFSYETDLTLNLQRRCKLAEGWNRKPMWKQADPRYVWNWHLLEDLIECKLDGFIIPILQGSYQVAELKLKNSPAVVSIMSRRCTRRLGTRMWRRGANLEGDAANFVESEQIVEINGFKFSLLQVRGSIPLLWEQIVDLSYKPRLKINKHEETPKVVQRHFHDLCQRYGEIMAVDLTDQHGDEGALSKAYATEMEKLPDVRYVSFDFHQVCGTTNFDNLGVLYEQIGDEFEKQGYFLVDADENILEEQKGVIRSNCIDCLDRTNVTQSFMGQKSLNLQLQRIGVCDSTECISTFEDDYTKFRTIWAEQGDEVSLQYAGTYALKGDLVRYGKQTMTGAIKDGLSAMSRYYLNNFQDGVRQDALDLISGRYTVGTHSPSQLQPIGSQPSFLPVASALLIGGVTVTSFTIHQAGRNTQQYLASALWAGVTAGVVAMIKANGRHLTSRPRLCHLI.

The disordered stretch occupies residues 37-56 (FSVNRRDGNIKPLDENASSG). The segment covering 40–50 (NRRDGNIKPLD) has biased composition (basic and acidic residues). The 327-residue stretch at 129-455 (LQALETTPGL…GDEVSLQYAG (327 aa)) folds into the SAC domain. The short motif at 390–401 (RSNCIDCLDRTN) is the Phosphatase catalytic core element. 2 consecutive transmembrane segments (helical) span residues 524–544 (SFLP…SFTI) and 555–575 (LASA…KANG).

Ubiquitous with a higher level of expression in young seedlings than in other tissues.

The protein localises to the endoplasmic reticulum membrane. Phosphoinositide phosphatase that hydrolyzes PtdIns(3)P and PtdIns(4)P. The sequence is that of Phosphoinositide phosphatase SAC8 (SAC8) from Arabidopsis thaliana (Mouse-ear cress).